The primary structure comprises 109 residues: uncharacterized protein (109 aa).

The N-terminal stretch at 1-25 is a signal peptide; it reads MKGIFLVVQLGFSIMVFLFLAAVNW. The chain crosses the membrane as a helical span at residues 73–95; the sequence is YPVMSALMIISFLYVLAALFLLI.

The protein resides in the membrane. This is an uncharacterized protein from Bacillus subtilis (strain 168).